We begin with the raw amino-acid sequence, 292 residues long: Cyclin-dependent kinase 5 (292 aa).

The 283-residue stretch at 4–286 folds into the Protein kinase domain; that stretch reads YEKLEKIGEG…AEEALQHPYF (283 aa). ATP contacts are provided by residues 10–18 and Lys33; that span reads IGEGTYGTV. Position 15 is a phosphotyrosine; by ABL1, EPHA4 and FYN (Tyr15). A Phosphothreonine modification is found at Thr17. Lys56 is modified (N6-acetyllysine). Ser72 carries the phosphoserine modification. Asp126 (proton acceptor) is an active-site residue. Residue Ser159 is modified to Phosphoserine.

The protein belongs to the protein kinase superfamily. CMGC Ser/Thr protein kinase family. CDC2/CDKX subfamily. Heterodimer composed of a catalytic subunit CDK5 and a regulatory subunit CDK5R1 (p25) and macromolecular complex composed of at least CDK5, CDK5R1 (p35) and CDK5RAP1 or CDK5RAP2 or CDK5RAP3. Only the heterodimer shows kinase activity. Under neurotoxic stress and neuronal injury conditions, p35 is cleaved by calpain to generate p25 that hyperactivates CDK5, that becomes functionally disabled and often toxic. Found in a trimolecular complex with CABLES1 and ABL1. Interacts with CABLES1 and CABLES2. Interacts with AATK and GSTP1. Binds to HDAC1 when in complex with p25. Interaction with myristoylation p35 promotes CDK5 association with membranes. Both isoforms 1 and 2 interacts with beta-catenin/CTNNB1. Interacts with delta-catenin/CTNND2 and APEX1. Interacts with P53/TP53 in neurons. Interacts with EPHA4; may mediate the activation of NGEF by EPHA4. Interacts with PTK2/FAK1. The complex p35/CDK5 interacts with CLOCK. Interacts with HTR6. In terms of processing, phosphorylation on Tyr-15 by ABL1 and FYN, and on Ser-159 by casein kinase 1 promotes kinase activity. By contrast, phosphorylation at Thr-14 inhibits activity. Phosphorylation at Ser-159 is essential for maximal catalytic activity. As to expression, ubiquitously expressed. Accumulates in cortical neurons (at protein level). In terms of tissue distribution, expressed in the testis, skeletal muscle, colon, bone marrow and ovary.

The protein localises to the cytoplasm. Its subcellular location is the nucleus. The protein resides in the cell membrane. It localises to the perikaryon. It is found in the cell projection. The protein localises to the lamellipodium. Its subcellular location is the growth cone. The protein resides in the postsynaptic density. It localises to the synapse. The catalysed reaction is L-seryl-[protein] + ATP = O-phospho-L-seryl-[protein] + ADP + H(+). It catalyses the reaction L-threonyl-[protein] + ATP = O-phospho-L-threonyl-[protein] + ADP + H(+). Its activity is regulated as follows. Inhibited by 2-(1-ethyl-2-hydroxyethylamino)-6-benzylamino-9-isopropylpurine (roscovitine), 1-isopropyl-4-aminobenzyl-6-ether-linked benzimidazoles, resveratrol, AT-7519 and olomoucine. Activated by CDK5R1 (p35) and CDK5R2 (p39) during the development of the nervous system; degradation of CDK5R1 (p35) and CDK5R2 (p39) by proteasome result in down regulation of kinase activity, during this process, CDK5 phosphorylates p35 and induces its ubiquitination and subsequent degradation. Kinase activity is mainly determined by the amount of p35 available and subcellular location; reversible association to plasma membrane inhibits activity. Long-term inactivation as well as CDK5R1 (p25)-mediated hyperactivation of CDK5 triggers cell death. The pro-death activity of hyperactivated CDK5 is suppressed by membrane association of CDK5, via myristoylation of p35. Brain-derived neurotrophic factor, glial-derived neurotrophic factor, nerve growth factor (NGF), retinoic acid, laminin and neuregulin promote activity. Neurotoxicity enhances nuclear activity, thus leading to MEF2 phosphorylation and inhibition prior to apoptosis of cortical neurons. Repression by GSTP1 via p25/p35 translocation prevents neurodegeneration. In terms of biological role, proline-directed serine/threonine-protein kinase essential for neuronal cell cycle arrest and differentiation and may be involved in apoptotic cell death in neuronal diseases by triggering abortive cell cycle re-entry. Interacts with D1 and D3-type G1 cyclins. Phosphorylates SRC, NOS3, VIM/vimentin, p35/CDK5R1, MEF2A, SIPA1L1, SH3GLB1, PXN, PAK1, MCAM/MUC18, SEPT5, SYN1, DNM1, AMPH, SYNJ1, CDK16, RAC1, RHOA, CDC42, TONEBP/NFAT5, MAPT/TAU, MAP1B, histone H1, p53/TP53, HDAC1, APEX1, PTK2/FAK1, huntingtin/HTT, ATM, MAP2, NEFH and NEFM. Regulates several neuronal development and physiological processes including neuronal survival, migration and differentiation, axonal and neurite growth, synaptogenesis, oligodendrocyte differentiation, synaptic plasticity and neurotransmission, by phosphorylating key proteins. Negatively regulates the CACNA1B/CAV2.2 -mediated Ca(2+) release probability at hippocampal neuronal soma and synaptic terminals. Activated by interaction with CDK5R1 (p35) and CDK5R2 (p39), especially in postmitotic neurons, and promotes CDK5R1 (p35) expression in an autostimulation loop. Phosphorylates many downstream substrates such as Rho and Ras family small GTPases (e.g. PAK1, RAC1, RHOA, CDC42) or microtubule-binding proteins (e.g. MAPT/TAU, MAP2, MAP1B), and modulates actin dynamics to regulate neurite growth and/or spine morphogenesis. Also phosphorylates exocytosis associated proteins such as MCAM/MUC18, SEPT5, SYN1, and CDK16/PCTAIRE1 as well as endocytosis associated proteins such as DNM1, AMPH and SYNJ1 at synaptic terminals. In the mature central nervous system (CNS), regulates neurotransmitter movements by phosphorylating substrates associated with neurotransmitter release and synapse plasticity; synaptic vesicle exocytosis, vesicles fusion with the presynaptic membrane, and endocytosis. Promotes cell survival by activating anti-apoptotic proteins BCL2 and STAT3, and negatively regulating of JNK3/MAPK10 activity. Phosphorylation of p53/TP53 in response to genotoxic and oxidative stresses enhances its stabilization by preventing ubiquitin ligase-mediated proteasomal degradation, and induces transactivation of p53/TP53 target genes, thus regulating apoptosis. Phosphorylation of p35/CDK5R1 enhances its stabilization by preventing calpain-mediated proteolysis producing p25/CDK5R1 and avoiding ubiquitin ligase-mediated proteasomal degradation. During aberrant cell-cycle activity and DNA damage, p25/CDK5 activity elicits cell-cycle activity and double-strand DNA breaks that precedes neuronal death by deregulating HDAC1. DNA damage triggered phosphorylation of huntingtin/HTT in nuclei of neurons protects neurons against polyglutamine expansion as well as DNA damage mediated toxicity. Phosphorylation of PXN reduces its interaction with PTK2/FAK1 in matrix-cell focal adhesions (MCFA) during oligodendrocytes (OLs) differentiation. Negative regulator of Wnt/beta-catenin signaling pathway. Activator of the GAIT (IFN-gamma-activated inhibitor of translation) pathway, which suppresses expression of a post-transcriptional regulon of proinflammatory genes in myeloid cells; phosphorylates the linker domain of glutamyl-prolyl tRNA synthetase (EPRS) in a IFN-gamma-dependent manner, the initial event in assembly of the GAIT complex. Phosphorylation of SH3GLB1 is required for autophagy induction in starved neurons. Phosphorylation of TONEBP/NFAT5 in response to osmotic stress mediates its rapid nuclear localization. MEF2 is inactivated by phosphorylation in nucleus in response to neurotoxin, thus leading to neuronal apoptosis. APEX1 AP-endodeoxyribonuclease is repressed by phosphorylation, resulting in accumulation of DNA damage and contributing to neuronal death. NOS3 phosphorylation down regulates NOS3-derived nitrite (NO) levels. SRC phosphorylation mediates its ubiquitin-dependent degradation and thus leads to cytoskeletal reorganization. May regulate endothelial cell migration and angiogenesis via the modulation of lamellipodia formation. Involved in dendritic spine morphogenesis by mediating the EFNA1-EPHA4 signaling. The complex p35/CDK5 participates in the regulation of the circadian clock by modulating the function of CLOCK protein: phosphorylates CLOCK at 'Thr-451' and 'Thr-461' and regulates the transcriptional activity of the CLOCK-BMAL1 heterodimer in association with altered stability and subcellular distribution. This Homo sapiens (Human) protein is Cyclin-dependent kinase 5.